Reading from the N-terminus, the 255-residue chain is tRNA (guanine-N(1)-)-methyltransferase (255 aa).

S-adenosyl-L-methionine is bound by residues Gly-113 and 133–138; that span reads IGDYVL.

Belongs to the RNA methyltransferase TrmD family. As to quaternary structure, homodimer.

It is found in the cytoplasm. The catalysed reaction is guanosine(37) in tRNA + S-adenosyl-L-methionine = N(1)-methylguanosine(37) in tRNA + S-adenosyl-L-homocysteine + H(+). Specifically methylates guanosine-37 in various tRNAs. The protein is tRNA (guanine-N(1)-)-methyltransferase of Escherichia coli O127:H6 (strain E2348/69 / EPEC).